We begin with the raw amino-acid sequence, 803 residues long: Spondin-1 (803 aa).

Positions 1–23 (MGLIFQPLFWQYVATSYALMVLG) are cleaved as a signal peptide. The Reelin domain maps to 24 to 190 (FLDETVEKAI…DLTLEGGNEK (167 aa)). Cystine bridges form between cysteine 39-cysteine 124, cysteine 152-cysteine 178, cysteine 195-cysteine 331, cysteine 196-cysteine 335, cysteine 198-cysteine 409, cysteine 437-cysteine 474, cysteine 448-cysteine 483, cysteine 453-cysteine 488, cysteine 496-cysteine 532, cysteine 507-cysteine 511, cysteine 542-cysteine 548, cysteine 553-cysteine 589, cysteine 564-cysteine 568, and cysteine 599-cysteine 604. The 193-residue stretch at 191–383 (TIPDCCACGT…LTSLDHPQSP (193 aa)) folds into the Spondin domain. Residue asparagine 210 is glycosylated (N-linked (GlcNAc...) asparagine). Ca(2+) contacts are provided by aspartate 320, aspartate 349, and aspartate 353. A disordered region spans residues 353–389 (DSGVTYESPNKPTIPQDKIRPLTSLDHPQSPSMTRGG). Residues 354 to 365 (SGVTYESPNKPT) are compositionally biased toward polar residues. 5 consecutive TSP type-1 domains span residues 436 to 489 (TCIY…PGCS), 495 to 549 (TCMM…EECE), 552 to 605 (SCIV…PECH), 608 to 662 (PCVL…PECP), and 664 to 717 (SCEL…RKCQ). N-linked (GlcNAc...) asparagine glycosylation occurs at asparagine 677. The tract at residues 722-741 (NERRHLKDAREKRRSEKIKE) is disordered. Residues 750–802 (VCKMKPWTAWTECTKFCGGGIQERFMTVKKRFKSSQFTSCKDKKEIRACNVHP) form the TSP type-1 6 domain.

In terms of tissue distribution, expressed at high levels in the floor plate.

It is found in the secreted. The protein localises to the extracellular space. Its subcellular location is the extracellular matrix. Promotes the attachment of spinal cord and sensory neuron cells and the outgrowth of neurites in vitro. May contribute to the growth and guidance of axons in both the spinal cord and the PNS. The polypeptide is Spondin-1 (spon1) (Xenopus laevis (African clawed frog)).